A 176-amino-acid chain; its full sequence is Inner membrane-spanning protein YciB (176 aa).

The next 5 membrane-spanning stretches (helical) occupy residues 24-44 (TATAVAIVATLVQIAWVAFRH), 49-69 (PMLWVSLGVVTVFGGATLVLH), 76-96 (WKPTVLYWAFSVALIVSQLAF), 119-139 (LNVVWGVFFVLLGLVNLFVAY), and 149-169 (FKLFGATGCLVVFIVGQSLWL).

It belongs to the YciB family.

It is found in the cell inner membrane. In terms of biological role, plays a role in cell envelope biogenesis, maintenance of cell envelope integrity and membrane homeostasis. The chain is Inner membrane-spanning protein YciB from Paraburkholderia xenovorans (strain LB400).